The primary structure comprises 808 residues: MWFFARDPVRDFPFELIPEPPEGGLPGPWALHRGRKKATGSPVSIFVYDVKPGAEEQTQVAKAAFKRFKTLRHPNILAYIDGLETEKCLHVVTEAVTPLGIYLKARVEAGGLKELEISWGLHQIVKALSFLVNDCSLIHNNVCMAAVFVDRAGEWKLGGLDYMYSAQGNGGGPPRKGIPELEQYDPPELADSSGRVVREKWSADMWRLGCLIWEVFNGPLPRAAALRNPGKIPKTLVPHYCELVGANPKVRPNPARFLQNCRAPGGFMSNRFVETNLFLEEIQIKEPAEKQKFFQELSKSLDAFPEDFCRHKVLPQLLTAFEFGNAGAVVLTPLFKVGKFLSAEEYQQKIIPVVVKMFSSTDRAMRIRLLQQMEQFIQYLDEPTVNTQIFPHVVHGFLDTNPAIREQTVKSMLLLAPKLNEANLNVELMKHFARLQAKDEQGPIRCNTTVCLGKIGSYLSASTRHRVLTSAFSRATRDPFAPSRVAGVLGFAATHNLYSMNDCAQKILPVLCGLTVDPEKSVRDQAFKAIRSFLSKLESVSEDPTQLEEVEKDVHAASSPGMGGAAASWAGWAVTGVSSLTSKLIRSHPTTAPTETNIPQRPTPEGVPAPAPTPVPATPTTSGHWETQEEDKDTAEDSSTADRWDDEDWGSLEQEAESVLAQQDDWSTGGQVSRASQVSNSDHKSSKSPESDWSSWEAEGSWEQGWQEPSSQEPPPDGTRLASEYNWGGPESSDKGDPFATLSARPSTQPRPDSWGEDNWEGLETDSRQVKAELARKKREERRREMEAKRAERKVAKGPMKLGARKLD.

One can recognise a Protein kinase domain in the interval 14-314; the sequence is FELIPEPPEG…PEDFCRHKVL (301 aa). HEAT repeat units lie at residues 350 to 388, 389 to 427, and 507 to 545; these read IIPVVVKMFSSTDRAMRIRLLQQMEQFIQYLDEPTVNTQ, IFPHVVHGFLDTNPAIREQTVKSMLLLAPKLNEANLNVE, and ILPVLCGLTVDPEKSVRDQAFKAIRSFLSKLESVSEDPT. Disordered stretches follow at residues 540–566, 587–646, and 658–808; these read VSEDPTQLEEVEKDVHAASSPGMGGAA, SHPT…RWDD, and SVLA…RKLD. Residues 556 to 566 show a composition bias toward low complexity; it reads AASSPGMGGAA. The span at 587 to 600 shows a compositional bias: polar residues; it reads SHPTTAPTETNIPQ. Pro residues predominate over residues 601–617; it reads RPTPEGVPAPAPTPVPA. Residues 660–680 show a composition bias toward polar residues; sequence LAQQDDWSTGGQVSRASQVSN. A compositionally biased stretch (basic and acidic residues) spans 681–690; sequence SDHKSSKSPE. A Phosphoserine modification is found at Ser-754. A compositionally biased stretch (acidic residues) spans 755-764; it reads WGEDNWEGLE. Residues 761–797 are a coiled coil; sequence EGLETDSRQVKAELARKKREERRREMEAKRAERKVAK. Composition is skewed to basic and acidic residues over residues 765–775 and 782–795; these read TDSRQVKAELA and RRREMEAKRAERKV. Residues 793–808 form an interaction with COPB1 region; that stretch reads RKVAKGPMKLGARKLD.

It belongs to the protein kinase superfamily. As to quaternary structure, interacts with GORAB. Interacts with COPA, COPB1 and COPB2. Homooligomer. Interacts with AP2B1. Ubiquitous.

It localises to the cytoplasm. It is found in the cytoskeleton. The protein resides in the microtubule organizing center. Its subcellular location is the centrosome. The protein localises to the endoplasmic reticulum-Golgi intermediate compartment. It localises to the golgi apparatus. It is found in the cis-Golgi network. The protein resides in the nucleus. Functionally, regulates COPI-mediated retrograde protein traffic at the interface between the Golgi apparatus and the endoplasmic reticulum. Involved in the maintenance of the Golgi apparatus morphology. In terms of biological role, acts as a transcriptional activator. It binds to three different types of GC-rich DNA binding sites (box-A, -B and -C) in the beta-polymerase promoter region. It also binds to the TERT promoter region. This chain is N-terminal kinase-like protein (SCYL1), found in Homo sapiens (Human).